The following is a 331-amino-acid chain: Ketol-acid reductoisomerase (NADP(+)) (331 aa).

The 181-residue stretch at 2–182 (AQLFYDSDAD…GGTRAGILET (181 aa)) folds into the KARI N-terminal Rossmann domain. NADP(+) is bound by residues 25 to 28 (YGSQ), Ser51, Ser53, and 83 to 86 (DEFQ). His108 is an active-site residue. NADP(+) is bound at residue Gly134. Positions 183–328 (NFKEETETDL…KGLRAMFSWL (146 aa)) constitute a KARI C-terminal knotted domain. The Mg(2+) site is built by Asp191, Glu195, Glu227, and Glu231. Position 252 (Ser252) interacts with substrate.

Belongs to the ketol-acid reductoisomerase family. Requires Mg(2+) as cofactor.

The enzyme catalyses (2R)-2,3-dihydroxy-3-methylbutanoate + NADP(+) = (2S)-2-acetolactate + NADPH + H(+). It carries out the reaction (2R,3R)-2,3-dihydroxy-3-methylpentanoate + NADP(+) = (S)-2-ethyl-2-hydroxy-3-oxobutanoate + NADPH + H(+). It participates in amino-acid biosynthesis; L-isoleucine biosynthesis; L-isoleucine from 2-oxobutanoate: step 2/4. Its pathway is amino-acid biosynthesis; L-valine biosynthesis; L-valine from pyruvate: step 2/4. In terms of biological role, involved in the biosynthesis of branched-chain amino acids (BCAA). Catalyzes an alkyl-migration followed by a ketol-acid reduction of (S)-2-acetolactate (S2AL) to yield (R)-2,3-dihydroxy-isovalerate. In the isomerase reaction, S2AL is rearranged via a Mg-dependent methyl migration to produce 3-hydroxy-3-methyl-2-ketobutyrate (HMKB). In the reductase reaction, this 2-ketoacid undergoes a metal-dependent reduction by NADPH to yield (R)-2,3-dihydroxy-isovalerate. This is Ketol-acid reductoisomerase (NADP(+)) from Prochlorococcus marinus (strain MIT 9313).